Consider the following 590-residue polypeptide: Protein Spindly (590 aa).

The stretch at 1–401 forms a coiled coil; sequence MSDLEDEIKV…SMARMKALSE (401 aa). The tract at residues 446–590 is disordered; the sequence is NKAQVQKRRR…KTMANECAQQ (145 aa). Basic and acidic residues-rich tracts occupy residues 483 to 497 and 518 to 527; these read SNEK…HPVE and RESKSVRICE. Polar residues-rich tracts occupy residues 541–554 and 572–590; these read VNDS…QTHQ and QQPT…CAQQ.

The protein belongs to the Spindly family.

It localises to the chromosome. It is found in the centromere. The protein localises to the kinetochore. Required for the localization of dynein and dynactin to the mitotic kintochore. Dynein is believed to control the initial lateral interaction between the kinetochore and spindle microtubules and to facilitate the subsequent formation of end-on kinetochore-microtubule attachments mediated by the NDC80 complex. May act as an adapter protein linking the dynein motor complex to various cargos. In Danio rerio (Zebrafish), this protein is Protein Spindly (spdl1).